Here is a 754-residue protein sequence, read N- to C-terminus: 5-methyltetrahydropteroyltriglutamate--homocysteine methyltransferase (754 aa).

Residues 17 to 20 (RELK) and K117 contribute to the 5-methyltetrahydropteroyltri-L-glutamate site. Residues 431–433 (IGS) and E484 contribute to the L-homocysteine site. L-methionine contacts are provided by residues 431-433 (IGS) and E484. 5-methyltetrahydropteroyltri-L-glutamate contacts are provided by residues 515-516 (RC) and W561. D599 is an L-homocysteine binding site. D599 is an L-methionine binding site. E605 lines the 5-methyltetrahydropteroyltri-L-glutamate pocket. Residues H641, C643, and E665 each coordinate Zn(2+). H694 acts as the Proton donor in catalysis. C726 is a Zn(2+) binding site.

The protein belongs to the vitamin-B12 independent methionine synthase family. Zn(2+) serves as cofactor.

The catalysed reaction is 5-methyltetrahydropteroyltri-L-glutamate + L-homocysteine = tetrahydropteroyltri-L-glutamate + L-methionine. It functions in the pathway amino-acid biosynthesis; L-methionine biosynthesis via de novo pathway; L-methionine from L-homocysteine (MetE route): step 1/1. Catalyzes the transfer of a methyl group from 5-methyltetrahydrofolate to homocysteine resulting in methionine formation. This Salmonella dublin (strain CT_02021853) protein is 5-methyltetrahydropteroyltriglutamate--homocysteine methyltransferase.